Here is a 201-residue protein sequence, read N- to C-terminus: Flagellin B1 (201 aa).

Residues 1 to 11 (MFEQNDDRDRG) constitute a propeptide that is removed on maturation.

Belongs to the archaeal flagellin family.

It is found in the archaeal flagellum. Flagellin is the subunit protein which polymerizes to form the filaments of archaeal flagella. This chain is Flagellin B1 (flaB1), found in Natrialba magadii (strain ATCC 43099 / DSM 3394 / CCM 3739 / CIP 104546 / IAM 13178 / JCM 8861 / NBRC 102185 / NCIMB 2190 / MS3) (Natronobacterium magadii).